The following is a 955-amino-acid chain: Villin-5 (955 aa).

Gelsolin-like repeat units lie at residues 29–111, 152–218, 274–339, and 644–712; these read FKPV…DKFL, VHVK…VEDG, LLHE…TVMF, and HFTQ…GSEP. Disordered stretches follow at residues 741–783 and 801–895; these read KGGG…RVRV and NSRN…GLPV. Positions 756 to 776 are enriched in polar residues; it reads PTYSGRSTVQDKSQRSRSMSF. Residues 817 to 836 are compositionally biased toward low complexity; it reads PKSATPDSSSAPSKSSATAS. Residues 842-864 show a composition bias toward basic and acidic residues; the sequence is DRPKSVKDGSELEKPKQEEDAKE. Residues 867–878 show a composition bias toward polar residues; that stretch reads NTMTSRVESLTI. Positions 890-955 constitute an HP domain; the sequence is DEGLPVYPYD…NRMKIALQLF (66 aa).

This sequence belongs to the villin/gelsolin family.

It is found in the cytoplasm. It localises to the cytoskeleton. In terms of biological role, ca(2+)-regulated actin-binding protein. Binds actin microfilaments (MFs). Involved in actin filament bundling, severing and capping. Caps the barbed end of actin filaments and is able to sever them in a calcium-dependent manner. In Oryza sativa subsp. japonica (Rice), this protein is Villin-5.